The chain runs to 1324 residues: MSDKGIFRTSSTPSIVDVTPDRGERPRKLVRSVLESPSQKDVASIVKIEQTPSRPFFNDFLKKRITDSLNERPNLLNKFMSAQDGTPSKSTGFNERSSQLVSEFTTTEDIENCEETTQVLPPRLVVYELRLTNFKSYAGTQIVGPFHPSFSSIVGPNGSGKSNVIDALLFVFGFRASKLRQSKASALIHKSATHPSLDSCDVEITFKEVNSDFTYVDGSELTVRRTAYKNNTSKYFVNGVESSFSAVSNLLKEKGIDLNHKRFLILQGEVESIAQMKPRAISEGDDGLLEYLEDIIGTSKYKPIIEENMQELSNSDDICAEKESRLKLVLSEKAKLEDSKNSVLSFLKDENELFMKQNQLYRTILYETRNKKTLVQNLLNSLEGKLQAHLEKFEQTERDISEKNEEVKSLREKAAKVKNDCTSEKKTRQSYEQQTVKIEEQLKFLLNKEKKLKKSIEALSFEKSEAENSLSSHDIDSQKLNSEIADLSLRLQQEELSLDDIRKSLQGKTEGISNAIEEKQKAMAPALEKINQLTSEKQILQVELDMLLNKENDLINDVESSQSSLDKLRNDAEENRNILSSKLKVLSDLKGEKKDVSKNIERKKETVHNTYRNLMSNRTKLEEMKASLSSSRSRGNVLESLQRLHESDNLNGFFGRLGDLATIDEAYDVAISTACPALNHIVVDNIETGQKCVAFLRSNNLGRASFIILKELAQKNLARIQTPENVPRLFDLLRFNDQKFAPAFYNVLQNTLVAKNLEQANRIAYGKTRWRVVTLSGQLIDKSGTMTGGGTRVKKGGMSSAITSDVSPASVETCDKQVQLEDTRYRQHLSELESLNQRFTEISERIPSAELEISKLQLDVSACDRLVAGEERRILQLKSDLKSIRNNNERKRNLQNKISNMDKEVEAININNEGLVTEIKTLQDKIMEIGGIRYRIQKSKVDDLHEQLKFVKDKLNKMSFKKKKNEQRSQSFQVELSNLTSEYDTTTESIATLKTELQSLNKYVDEHKSRLREFENALWDINSSIDELVKFIEFESKQMNSVKAERIELENQIQEQRTALSEVGNNENKYLKLMSNLKLHNLTEFCDQTTMDSTFPEYSEDELSSVDKSELVSNISVLKKKTEDREVDINVLSEYRRCNKEAEKRDSDYQSELQKRTDLKKVVTDLQSQRLDEFMYGFGIISMKLKEMYQIITMGGNAELELVDSLDPFSEGVLFSVMPPKKSWKNISNLSGGEKTLSSLALVFALHNYKPTPLYVMDEIDAALDFKNVSIVANYIKERTKNAQFIVISLRSNMFELSSRLVGIYKTANMTKSVTINNKEILTD.

The interval 1–24 (MSDKGIFRTSSTPSIVDVTPDRGE) is disordered. The residue at position 19 (Thr-19) is a Phosphothreonine; by CDC2. 155–162 (GPNGSGKS) is an ATP binding site. 2 coiled-coil regions span residues 310 to 337 (QELS…AKLE) and 370 to 628 (NKKT…KASL). Positions 651–764 (NGFFGRLGDL…KNLEQANRIA (114 aa)) constitute an SMC hinge domain. Coiled coils occupy residues 825–1077 (YRQH…MSNL) and 1297–1324 (LSSR…ILTD).

This sequence belongs to the SMC family. SMC4 subfamily. Forms a heterodimer with cut14/smc2. Component of the condensin complex, which contains the smc2 and smc4 heterodimer, and three non smc subunits that probably regulate the complex: cnd1, cnd2 and cnd3. Interacts with C1739.07. Post-translationally, phosphorylated by CDC2 on Thr-19 at metaphase.

It localises to the nucleus. The protein localises to the cytoplasm. It is found in the chromosome. Functionally, central component of the condensin complex, a complex required for conversion of interphase chromatin into mitotic-like condense chromosomes. The condensin complex probably introduces positive supercoils into relaxed DNA in the presence of type I topoisomerases and converts nicked DNA into positive knotted forms in the presence of type II topoisomerases. In Schizosaccharomyces pombe (strain 972 / ATCC 24843) (Fission yeast), this protein is Structural maintenance of chromosomes protein 4 (cut3).